We begin with the raw amino-acid sequence, 100 residues long: Urease subunit gamma (100 aa).

This sequence belongs to the urease gamma subunit family. In terms of assembly, heterotrimer of UreA (gamma), UreB (beta) and UreC (alpha) subunits. Three heterotrimers associate to form the active enzyme.

The protein resides in the cytoplasm. It catalyses the reaction urea + 2 H2O + H(+) = hydrogencarbonate + 2 NH4(+). It functions in the pathway nitrogen metabolism; urea degradation; CO(2) and NH(3) from urea (urease route): step 1/1. The chain is Urease subunit gamma from Leptothrix cholodnii (strain ATCC 51168 / LMG 8142 / SP-6) (Leptothrix discophora (strain SP-6)).